A 192-amino-acid polypeptide reads, in one-letter code: Peptidyl-tRNA hydrolase (192 aa).

Residue Tyr-16 coordinates tRNA. His-21 functions as the Proton acceptor in the catalytic mechanism. 2 residues coordinate tRNA: Tyr-66 and Asn-68.

It belongs to the PTH family. In terms of assembly, monomer.

The protein localises to the cytoplasm. The enzyme catalyses an N-acyl-L-alpha-aminoacyl-tRNA + H2O = an N-acyl-L-amino acid + a tRNA + H(+). Hydrolyzes ribosome-free peptidyl-tRNAs (with 1 or more amino acids incorporated), which drop off the ribosome during protein synthesis, or as a result of ribosome stalling. In terms of biological role, catalyzes the release of premature peptidyl moieties from peptidyl-tRNA molecules trapped in stalled 50S ribosomal subunits, and thus maintains levels of free tRNAs and 50S ribosomes. The protein is Peptidyl-tRNA hydrolase of Aquifex aeolicus (strain VF5).